The primary structure comprises 480 residues: Aspartyl/glutamyl-tRNA(Asn/Gln) amidotransferase subunit B (480 aa).

The protein belongs to the GatB/GatE family. GatB subfamily. In terms of assembly, heterotrimer of A, B and C subunits.

It catalyses the reaction L-glutamyl-tRNA(Gln) + L-glutamine + ATP + H2O = L-glutaminyl-tRNA(Gln) + L-glutamate + ADP + phosphate + H(+). The catalysed reaction is L-aspartyl-tRNA(Asn) + L-glutamine + ATP + H2O = L-asparaginyl-tRNA(Asn) + L-glutamate + ADP + phosphate + 2 H(+). In terms of biological role, allows the formation of correctly charged Asn-tRNA(Asn) or Gln-tRNA(Gln) through the transamidation of misacylated Asp-tRNA(Asn) or Glu-tRNA(Gln) in organisms which lack either or both of asparaginyl-tRNA or glutaminyl-tRNA synthetases. The reaction takes place in the presence of glutamine and ATP through an activated phospho-Asp-tRNA(Asn) or phospho-Glu-tRNA(Gln). This Streptococcus pneumoniae (strain 70585) protein is Aspartyl/glutamyl-tRNA(Asn/Gln) amidotransferase subunit B.